The sequence spans 289 residues: BTB/POZ domain-containing protein KCTD7 (289 aa).

A disordered region spans residues 1-42 (MVVVTGREPDSRHSDGAMSSSEAEDDFLEPATPTATQAGHGL). Positions 53–141 (VPLNIGGAHF…YAIGPLLEQL (89 aa)) constitute a BTB domain.

In terms of assembly, interacts with CUL3. In terms of tissue distribution, high expression in brain, particularly in post-mitotic neurons. Expressed in the mitral cells of the olfactory bulbs, the hippocampus, the deep layers of the cerebral cortex and Purkinje cells of the cerebellum. Not detected in astrocytes or microglial cells. Also expressed in heart, liver, spleen and kidney.

The protein resides in the cell membrane. It is found in the cytoplasm. Its subcellular location is the cytosol. May be involved in the control of excitability of cortical neurons. The sequence is that of BTB/POZ domain-containing protein KCTD7 (Kctd7) from Mus musculus (Mouse).